Consider the following 185-residue polypeptide: Ethylene-responsive transcription factor ERF017 (185 aa).

The AP2/ERF DNA-binding region spans 11 to 68; that stretch reads KYKGVRKRKWGKWVSEIRLPNSRERIWLGSYDTPEKAARAFDAALYCLRGNNAKFNFP.

Belongs to the AP2/ERF transcription factor family. ERF subfamily.

The protein resides in the nucleus. Functionally, probably acts as a transcriptional activator. Binds to the GCC-box pathogenesis-related promoter element. May be involved in the regulation of gene expression by stress factors and by components of stress signal transduction pathways. The sequence is that of Ethylene-responsive transcription factor ERF017 (ERF017) from Arabidopsis thaliana (Mouse-ear cress).